Here is a 762-residue protein sequence, read N- to C-terminus: Catalase-peroxidase (762 aa).

The disordered stretch occupies residues 1-22 (MAEAKCPFSQSRSNANVAGGGT). Residues 96–242 (WHSAGTYRVF…LAASHMGLIY (147 aa)) constitute a cross-link (tryptophyl-tyrosyl-methioninium (Trp-Tyr) (with M-268)). H97 functions as the Proton acceptor in the catalytic mechanism. The tryptophyl-tyrosyl-methioninium (Tyr-Met) (with W-96) cross-link spans 242–268 (YVNPEGPDGNPDPVAAARDIRTTFGRM). H283 is a heme b binding site.

It belongs to the peroxidase family. Peroxidase/catalase subfamily. As to quaternary structure, homodimer or homotetramer. Requires heme b as cofactor. In terms of processing, formation of the three residue Trp-Tyr-Met cross-link is important for the catalase, but not the peroxidase activity of the enzyme.

It localises to the cytoplasm. The enzyme catalyses H2O2 + AH2 = A + 2 H2O. It catalyses the reaction 2 H2O2 = O2 + 2 H2O. Bifunctional enzyme with both catalase and broad-spectrum peroxidase activity. This Aspergillus niger (strain ATCC MYA-4892 / CBS 513.88 / FGSC A1513) protein is Catalase-peroxidase.